The sequence spans 74 residues: Peptide Im-4 (74 aa).

A signal peptide spans 1 to 22; that stretch reads MKFQYLLAIFMIVLVVTDHCQA. Lys39 is modified (lysine amide; partial). A propeptide spanning residues 40–74 is cleaved from the precursor; the sequence is GRRRRQLEARYEPQQRNFRKREIDFEKLFANMPDY.

This sequence belongs to the non-disulfide-bridged peptide (NDBP) superfamily. Short antimicrobial peptide (group 4) family. Expressed by the venom gland.

Its subcellular location is the secreted. The protein resides in the target cell membrane. In terms of biological role, antimicrobial peptide that probably forms pores in target membranes. Has antibacterial activity against Gram-positive bacteria S.aureus NBRC 13276 (MIC=5-10 uM) and B.subtilis NBRC 3009 (MIC=2.5-5 uM) but not against Gram-negative bacterium E.coli NBRC 3972. The chain is Peptide Im-4 from Isometrus maculatus (Lesser brown scorpion).